A 239-amino-acid chain; its full sequence is Cytochrome c oxidase subunit 2 (239 aa).

The Mitochondrial intermembrane segment spans residues 1 to 26 (MATPAQLGLMDAASPVMEEMIYFHDH). Residues 27–48 (VMLVLILITCLIFYSMLVLISS) form a helical membrane-spanning segment. Residues 49-62 (KYIYRFLTDGHVIE) lie on the Mitochondrial matrix side of the membrane. A helical transmembrane segment spans residues 63–82 (TVWTVIPAIILVVVALPSLK). Residues 83-239 (LLYLTDELDN…ESLGSLNMKR (157 aa)) are Mitochondrial intermembrane-facing. Cu cation contacts are provided by histidine 161, cysteine 196, glutamate 198, cysteine 200, histidine 204, and methionine 207. Glutamate 198 serves as a coordination point for Mg(2+).

Belongs to the cytochrome c oxidase subunit 2 family. In terms of assembly, component of the cytochrome c oxidase (complex IV, CIV), a multisubunit enzyme composed of a catalytic core of 3 subunits and several supernumerary subunits. The complex exists as a monomer or a dimer and forms supercomplexes (SCs) in the inner mitochondrial membrane with ubiquinol-cytochrome c oxidoreductase (cytochrome b-c1 complex, complex III, CIII). The cofactor is Cu cation.

The protein localises to the mitochondrion inner membrane. It catalyses the reaction 4 Fe(II)-[cytochrome c] + O2 + 8 H(+)(in) = 4 Fe(III)-[cytochrome c] + 2 H2O + 4 H(+)(out). Its function is as follows. Component of the cytochrome c oxidase, the last enzyme in the mitochondrial electron transport chain which drives oxidative phosphorylation. The respiratory chain contains 3 multisubunit complexes succinate dehydrogenase (complex II, CII), ubiquinol-cytochrome c oxidoreductase (cytochrome b-c1 complex, complex III, CIII) and cytochrome c oxidase (complex IV, CIV), that cooperate to transfer electrons derived from NADH and succinate to molecular oxygen, creating an electrochemical gradient over the inner membrane that drives transmembrane transport and the ATP synthase. Cytochrome c oxidase is the component of the respiratory chain that catalyzes the reduction of oxygen to water. Electrons originating from reduced cytochrome c in the intermembrane space (IMS) are transferred via the dinuclear copper A center (CU(A)) of subunit 2 and heme A of subunit 1 to the active site in subunit 1, a binuclear center (BNC) formed by heme A3 and copper B (CU(B)). The BNC reduces molecular oxygen to 2 water molecules using 4 electrons from cytochrome c in the IMS and 4 protons from the mitochondrial matrix. This is Cytochrome c oxidase subunit 2 (COII) from Branchiostoma lanceolatum (Common lancelet).